Here is a 228-residue protein sequence, read N- to C-terminus: CD302 antigen (228 aa).

A signal peptide spans 1–20 (MPHAALSSLVLLSLATAIVA). At 21 to 165 (DCPSSTWVQF…YDKKYLSDNH (145 aa)) the chain is on the extracellular side. The 120-residue stretch at 30 to 149 (FQGSCYAFLQ…CEISSVEGTL (120 aa)) folds into the C-type lectin domain. N-linked (GlcNAc...) asparagine glycosylation occurs at N107. Residues C125 and C140 are joined by a disulfide bond. Residues 166-186 (ILISTLVIASTVTLAVLGAII) traverse the membrane as a helical segment. The Cytoplasmic segment spans residues 187–228 (WFLYRRNARSGFTSFSPAPLSPYSDGCALVVAEEDEYAVQLD).

It localises to the membrane. The protein resides in the cell projection. Its subcellular location is the filopodium. The protein localises to the cytoplasm. It is found in the cell cortex. It localises to the microvillus. Functionally, potential multifunctional C-type lectin receptor that may play roles in endocytosis and phagocytosis as well as in cell adhesion and migration. This Mus musculus (Mouse) protein is CD302 antigen (Cd302).